The primary structure comprises 1845 residues: Proteasome adapter and scaffold protein ECM29 (1845 aa).

Ala-2 is subject to N-acetylalanine. HEAT repeat units lie at residues 28–65 (TDEQLQNIISKFLPPVLLKLSSTQEGVRKKVMELLVHL), 107–144 (YPRLPVEKQCELAPTLLTAMEGKPQPQQDSLMHLLIPT), 162–205 (NLAE…QGSS), 326–362 (RDPVSTRVKLKIVPHLLRSRQAAETFPANIQVVYDGL), 387–426 (PEIKIKPLGPMLLNGLTKLINEYKEDPKLLSMAYSAVGKL), 429–466 (RMPHLFTKDIALVQQLFEALCKEEPETRLAIQEALSMM), 469–507 (AYSTLEGAQRTLMEALVASYLIKPEVQVRQVAVKFASTV), 683–720 (YPEKLATKFVDKTEWIKSLMNNSKEEMRELAALFYSVV), 721–759 (VSTVSGNELKSMIEQLIKTTKDNHSPEIQHGSLLALGFT), 783–820 (TLPDQEELIQSATETIGSFLDSTSPLLAIAACTALGEI), 829–868 (PSEGSGFTKLHLVESLLSRIPSSKETNKMKERAIQTLGYF), 870–907 (VGDGDFPHQKLLLQGLMDSVEAKQIELQFTIGEAITSA), 931–969 (AGAKVNDVVPWVLDVILNKHIISPNPHVRQAACIWLLSL), 975–1012 (THKEVKSHLKEIQSAFVSVLSENDELSQDVASKGLGLV), 1013–1050 (YELGNEQDQQELVSTLVETLMTGKRVKHEVSGETVVFQ), 1112–1149 (AGEQLAPFLPQLVPRLYRYQFDPNLGIRQAMTSIWNAL), 1152–1189 (DKSMVDKYLKEILQDLVKNLTSNMWRVRESSCLALNDL), 1194–1231 (PLDDIIDKLPEIWETLFRVQDDIKESVRKAAELALKTL), 1243–1281 (KGAAGQRTIAALLPCLLDKGMMSTVTEVRALSINTLVKI), 1285–1323 (AGAMLKPHAPKLIPALLESLSVLEPQVLNYLSLRATEQE), 1348–1386 (LQYLDVSVLGELVPRLCELIRSGVGLGTKGGCASVIVSL), 1390–1427 (CPQDLTPYSGKLMSALLSGLTDRNSVIQKSCAFAMGHL), 1517–1554 (SFGGIRLYLQELITITQKALQSQSWKMKAQGAIAMASI), 1558–1595 (TSSLVPPYLGMILTALLQGLAGRTWAGKEELLKAIACV), 1605–1642 (KSVPNQPSTNEILQAVLKECSKENVKYKIVAISCAADI), 1646–1683 (TKEDRFQEFSNIVIPLIKKNSLESSGVRTTKNEEENEK), and 1779–1822 (TYSS…LATM). Residues 193–207 (QSRQNSSSAQGSSSN) are compositionally biased toward low complexity. Residues 193-217 (QSRQNSSSAQGSSSNSGGGSGIPQP) are disordered. A Phosphoserine modification is found at Ser-830. Position 836 is a phosphothreonine (Thr-836). A Glycyl lysine isopeptide (Lys-Gly) (interchain with G-Cter in SUMO1) cross-link involves residue Lys-1039.

This sequence belongs to the ECM29 family. As to quaternary structure, non-stoichiometric component of the proteasome; associates with the 26S proteasome. Interacts (via N-terminus) with VPS11, VPS26A, VPS36, RAB11FIP4 and RABEP1. Interacts (via C-terminus) with DCTN1, DCTN2, KIF5B, MYH7, MYH10, MYO10 and ARF6.

It localises to the endoplasmic reticulum. The protein localises to the endoplasmic reticulum-Golgi intermediate compartment. Its subcellular location is the endosome. The protein resides in the cytoplasm. It is found in the cytoskeleton. It localises to the microtubule organizing center. The protein localises to the centrosome. Its subcellular location is the nucleus. The protein resides in the multivesicular body. It is found in the cytoplasmic vesicle. In terms of biological role, adapter/scaffolding protein that binds to the 26S proteasome, motor proteins and other compartment specific proteins. May couple the proteasome to different compartments including endosome, endoplasmic reticulum and centrosome. May play a role in ERAD and other enhanced proteolysis. Promotes proteasome dissociation under oxidative stress. The chain is Proteasome adapter and scaffold protein ECM29 from Homo sapiens (Human).